A 287-amino-acid chain; its full sequence is Leukocyte-associated immunoglobulin-like receptor 1 (287 aa).

Positions 1 to 21 are cleaved as a signal peptide; it reads MSPHPTALLGLVLCLAQTIHT. Residues 22–165 lie on the Extracellular side of the membrane; it reads QEEDLPRPSI…SQGLKAEHLY (144 aa). Residues 29–117 form the Ig-like C2-type domain; sequence PSISAEPGTV…KWSEQSDYLE (89 aa). The cysteines at positions 49 and 101 are disulfide-linked. N69 carries N-linked (GlcNAc...) asparagine glycosylation. Residues 121–155 are disordered; the sequence is KESSGGPDSPDTEPGSSAGPTQRPSDNSHNEHAPA. A compositionally biased stretch (polar residues) spans 134 to 145; that stretch reads PGSSAGPTQRPS. Residues 166–186 form a helical membrane-spanning segment; sequence ILIGVSVVFLFCLLLLVLFCL. The Cytoplasmic portion of the chain corresponds to 187–287; that stretch reads HRQNQIKQGP…SITYAAVARH (101 aa). Residues 192–211 are disordered; that stretch reads IKQGPPRSKDEEQKPQQRPD. Positions 198–208 are enriched in basic and acidic residues; it reads RSKDEEQKPQQ. 2 consecutive short sequence motifs (ITIM motif) follow at residues 249 to 254 and 279 to 284; these read VTYAQL and ITYAAV. Phosphotyrosine is present on residues Y251 and Y281.

In terms of assembly, interacts with SH2 domains of tyrosine-protein phosphatases PTPN6 and PTPN11. The interaction with PTPN6 is constitutive. Interacts with the SH2 domain of CSK. Binds with high affinity to extracellular matrix collagens, the interaction is functionally important. Post-translationally, phosphorylation at Tyr-251 and Tyr-281 activates it. May be phosphorylated by LCK. In terms of processing, N-glycosylated. In terms of tissue distribution, expressed on the majority of peripheral mononuclear cells, including natural killer (NK) cells, T-cells, B-cells, monocytes, and dendritic cells. Highly expressed in naive T-cells and B-cells but no expression on germinal center B-cells. Abnormally low expression in naive B-cells from HIV-1 infected patients. Very low expression in NK cells from a patient with chronic active Epstein-Barr virus infection.

It localises to the cell membrane. In terms of biological role, functions as an inhibitory receptor that plays a constitutive negative regulatory role on cytolytic function of natural killer (NK) cells, B-cells and T-cells. Activation by Tyr phosphorylation results in recruitment and activation of the phosphatases PTPN6 and PTPN11. It also reduces the increase of intracellular calcium evoked by B-cell receptor ligation. May also play its inhibitory role independently of SH2-containing phosphatases. Modulates cytokine production in CD4+ T-cells, down-regulating IL2 and IFNG production while inducing secretion of transforming growth factor beta. Also down-regulates IgG and IgE production in B-cells as well as IL8, IL10 and TNF secretion. Inhibits proliferation and induces apoptosis in myeloid leukemia cell lines as well as prevents nuclear translocation of NF-kappa-B p65 subunit/RELA and phosphorylation of I-kappa-B alpha/CHUK in these cells. Inhibits the differentiation of peripheral blood precursors towards dendritic cells. The protein is Leukocyte-associated immunoglobulin-like receptor 1 (LAIR1) of Homo sapiens (Human).